The following is a 208-amino-acid chain: Small ribosomal subunit protein uS4 (208 aa).

Residues L98 to A159 enclose the S4 RNA-binding domain.

This sequence belongs to the universal ribosomal protein uS4 family. Part of the 30S ribosomal subunit. Contacts protein S5. The interaction surface between S4 and S5 is involved in control of translational fidelity.

Functionally, one of the primary rRNA binding proteins, it binds directly to 16S rRNA where it nucleates assembly of the body of the 30S subunit. Its function is as follows. With S5 and S12 plays an important role in translational accuracy. This Acidithiobacillus ferrooxidans (strain ATCC 23270 / DSM 14882 / CIP 104768 / NCIMB 8455) (Ferrobacillus ferrooxidans (strain ATCC 23270)) protein is Small ribosomal subunit protein uS4.